The sequence spans 710 residues: Polyribonucleotide nucleotidyltransferase (710 aa).

Positions 487 and 493 each coordinate Mg(2+). In terms of domain architecture, KH spans 554-613 (PKIITMTINPDKIRDVIGPSGKQINKIIEETGVKIDIEQDGTVFISSIDQQMNEKAKKII). The region spanning 623 to 691 (GEIYLGKVKR…KQGRVNLSRK (69 aa)) is the S1 motif domain.

It belongs to the polyribonucleotide nucleotidyltransferase family. It depends on Mg(2+) as a cofactor.

The protein localises to the cytoplasm. It carries out the reaction RNA(n+1) + phosphate = RNA(n) + a ribonucleoside 5'-diphosphate. Functionally, involved in mRNA degradation. Catalyzes the phosphorolysis of single-stranded polyribonucleotides processively in the 3'- to 5'-direction. The polypeptide is Polyribonucleotide nucleotidyltransferase (Bacillus cytotoxicus (strain DSM 22905 / CIP 110041 / 391-98 / NVH 391-98)).